Here is a 537-residue protein sequence, read N- to C-terminus: CTP synthase (537 aa).

The tract at residues 1 to 268 (MGETKYIFVT…DSTILEKMGL (268 aa)) is amidoligase domain. S15 is a binding site for CTP. S15 contributes to the UTP binding site. Position 16-21 (16-21 (SLGKGI)) interacts with ATP. Y56 is a binding site for L-glutamine. D73 contributes to the ATP binding site. Positions 73 and 143 each coordinate Mg(2+). CTP contacts are provided by residues 150–152 (DIE), 189–194 (KTKPTQ), and K225. UTP is bound by residues 189–194 (KTKPTQ) and K225. The region spanning 296 to 537 (NIALVGKYDL…VKAAIENEKN (242 aa)) is the Glutamine amidotransferase type-1 domain. G357 provides a ligand contact to L-glutamine. C384 acts as the Nucleophile; for glutamine hydrolysis in catalysis. Residues 385–388 (LGMQ), E408, and R465 each bind L-glutamine. Active-site residues include H510 and E512.

Belongs to the CTP synthase family. In terms of assembly, homotetramer.

It carries out the reaction UTP + L-glutamine + ATP + H2O = CTP + L-glutamate + ADP + phosphate + 2 H(+). The catalysed reaction is L-glutamine + H2O = L-glutamate + NH4(+). The enzyme catalyses UTP + NH4(+) + ATP = CTP + ADP + phosphate + 2 H(+). It functions in the pathway pyrimidine metabolism; CTP biosynthesis via de novo pathway; CTP from UDP: step 2/2. Allosterically activated by GTP, when glutamine is the substrate; GTP has no effect on the reaction when ammonia is the substrate. The allosteric effector GTP functions by stabilizing the protein conformation that binds the tetrahedral intermediate(s) formed during glutamine hydrolysis. Inhibited by the product CTP, via allosteric rather than competitive inhibition. Functionally, catalyzes the ATP-dependent amination of UTP to CTP with either L-glutamine or ammonia as the source of nitrogen. Regulates intracellular CTP levels through interactions with the four ribonucleotide triphosphates. This Bacteroides thetaiotaomicron (strain ATCC 29148 / DSM 2079 / JCM 5827 / CCUG 10774 / NCTC 10582 / VPI-5482 / E50) protein is CTP synthase.